The sequence spans 476 residues: Angiotensinogen (476 aa).

An N-terminal signal peptide occupies residues 1–24; that stretch reads MAPAGVSLRATILCLLAWAGLAAG. Asp25 is subject to Beta-decarboxylated aspartate; in form angiotensin-A. N-linked (GlcNAc...) asparagine glycosylation is found at Asn38, Asn161, Asn295, and Asn319. A disulfide bond links Cys42 and Cys162.

The protein belongs to the serpin family. As to quaternary structure, during pregnancy, exists as a disulfide-linked 2:2 heterotetramer with the proform of PRG2 and as a complex (probably a 2:2:2 heterohexamer) with pro-PRG2 and C3dg. Post-translationally, beta-decarboxylation of Asp-25 in angiotensin-2, by mononuclear leukocytes produces alanine. The resulting peptide form, angiotensin-A, has the same affinity for the AT1 receptor as angiotensin-2, but a higher affinity for the AT2 receptor. In response to low blood pressure, the enzyme renin/REN cleaves angiotensinogen to produce angiotensin-1. Angiotensin-1 is a substrate of ACE (angiotensin converting enzyme) that removes a dipeptide to yield the physiologically active peptide angiotensin-2. Angiotensin-1 and angiotensin-2 can be further processed to generate angiotensin-3, angiotensin-4. Angiotensin 1-9 is cleaved from angiotensin-1 by ACE2 and can be further processed by ACE to produce angiotensin 1-7, angiotensin 1-5 and angiotensin 1-4. Angiotensin 1-7 has also been proposed to be cleaved from angiotensin-2 by ACE2 or from angiotensin-1 by MME (neprilysin). In terms of processing, the disulfide bond is labile. Angiotensinogen is present in the circulation in a near 40:60 ratio with the oxidized disulfide-bonded form, which preferentially interacts with receptor-bound renin. In terms of tissue distribution, expressed by the liver and secreted in plasma.

Its subcellular location is the secreted. Essential component of the renin-angiotensin system (RAS), a potent regulator of blood pressure, body fluid and electrolyte homeostasis. Its function is as follows. Acts directly on vascular smooth muscle as a potent vasoconstrictor, affects cardiac contractility and heart rate through its action on the sympathetic nervous system, and alters renal sodium and water absorption through its ability to stimulate the zona glomerulosa cells of the adrenal cortex to synthesize and secrete aldosterone. Acts by binding to angiotensin receptors AGTR1 and AGTR2. Also binds the DEAR/FBXW7-AS1 receptor. Functionally, stimulates aldosterone release. In terms of biological role, is a ligand for the G-protein coupled receptor MAS1. Has vasodilator and antidiuretic effects. Has an antithrombotic effect that involves MAS1-mediated release of nitric oxide from platelets. In Homo sapiens (Human), this protein is Angiotensinogen.